The primary structure comprises 352 residues: Uroporphyrinogen decarboxylase (352 aa).

Substrate is bound by residues Arg-27–Arg-31, Asp-77, Tyr-154, Thr-209, and His-325.

Belongs to the uroporphyrinogen decarboxylase family. As to quaternary structure, homodimer.

It localises to the cytoplasm. It carries out the reaction uroporphyrinogen III + 4 H(+) = coproporphyrinogen III + 4 CO2. It functions in the pathway porphyrin-containing compound metabolism; protoporphyrin-IX biosynthesis; coproporphyrinogen-III from 5-aminolevulinate: step 4/4. Its function is as follows. Catalyzes the decarboxylation of four acetate groups of uroporphyrinogen-III to yield coproporphyrinogen-III. The sequence is that of Uroporphyrinogen decarboxylase from Legionella pneumophila subsp. pneumophila (strain Philadelphia 1 / ATCC 33152 / DSM 7513).